A 356-amino-acid chain; its full sequence is Probable farnesyl diphosphate synthase DDB_G0278823 (356 aa).

Isopentenyl diphosphate-binding residues include lysine 55, arginine 58, and glutamine 94. The Mg(2+) site is built by aspartate 101 and aspartate 105. Arginine 110 provides a ligand contact to dimethylallyl diphosphate. Residue arginine 111 participates in isopentenyl diphosphate binding. Residues lysine 203, threonine 204, glutamine 243, lysine 260, and lysine 269 each coordinate dimethylallyl diphosphate.

The protein belongs to the FPP/GGPP synthase family. The cofactor is Mg(2+).

The protein localises to the cytoplasm. The catalysed reaction is isopentenyl diphosphate + dimethylallyl diphosphate = (2E)-geranyl diphosphate + diphosphate. It catalyses the reaction isopentenyl diphosphate + (2E)-geranyl diphosphate = (2E,6E)-farnesyl diphosphate + diphosphate. The protein operates within isoprenoid biosynthesis; farnesyl diphosphate biosynthesis; farnesyl diphosphate from geranyl diphosphate and isopentenyl diphosphate: step 1/1. It participates in isoprenoid biosynthesis; geranyl diphosphate biosynthesis; geranyl diphosphate from dimethylallyl diphosphate and isopentenyl diphosphate: step 1/1. Inhibited by aminobisphosphonate drugs (aBP), such as risedronate and alendronate. Key enzyme in isoprenoid biosynthesis which catalyzes the formation of farnesyl diphosphate (FPP), a sterol precursor. This chain is Probable farnesyl diphosphate synthase DDB_G0278823, found in Dictyostelium discoideum (Social amoeba).